A 462-amino-acid chain; its full sequence is UDP-N-acetylmuramoylalanine--D-glutamate ligase (462 aa).

An ATP-binding site is contributed by 109–115 (GTDGKST).

This sequence belongs to the MurCDEF family.

The protein resides in the cytoplasm. The enzyme catalyses UDP-N-acetyl-alpha-D-muramoyl-L-alanine + D-glutamate + ATP = UDP-N-acetyl-alpha-D-muramoyl-L-alanyl-D-glutamate + ADP + phosphate + H(+). It participates in cell wall biogenesis; peptidoglycan biosynthesis. In terms of biological role, cell wall formation. Catalyzes the addition of glutamate to the nucleotide precursor UDP-N-acetylmuramoyl-L-alanine (UMA). The protein is UDP-N-acetylmuramoylalanine--D-glutamate ligase of Leptospira borgpetersenii serovar Hardjo-bovis (strain JB197).